Here is a 130-residue protein sequence, read N- to C-terminus: Glycine cleavage system H protein (130 aa).

One can recognise a Lipoyl-binding domain in the interval T24–K106. K65 carries the post-translational modification N6-lipoyllysine.

This sequence belongs to the GcvH family. In terms of assembly, the glycine cleavage system is composed of four proteins: P, T, L and H. Requires (R)-lipoate as cofactor.

In terms of biological role, the glycine cleavage system catalyzes the degradation of glycine. The H protein shuttles the methylamine group of glycine from the P protein to the T protein. The chain is Glycine cleavage system H protein from Teredinibacter turnerae (strain ATCC 39867 / T7901).